We begin with the raw amino-acid sequence, 412 residues long: Multidrug resistance protein MdtA (412 aa).

The signal sequence occupies residues 1–21 (MKGSNIRRWGAALAVVIIAGA). 2 disordered regions span residues 33–53 (GSGA…RHGR) and 389–412 (VVTA…GARS).

Belongs to the membrane fusion protein (MFP) (TC 8.A.1) family. In terms of assembly, part of a tripartite efflux system composed of MdtA, MdtB and MdtC.

It localises to the cell inner membrane. The sequence is that of Multidrug resistance protein MdtA from Klebsiella pneumoniae subsp. pneumoniae (strain ATCC 700721 / MGH 78578).